Consider the following 131-residue polypeptide: D-ribose pyranase (131 aa).

The active-site Proton donor is His20. Substrate contacts are provided by residues Asp28, His98, and 120 to 122 (YAN).

It belongs to the RbsD / FucU family. RbsD subfamily. Homodecamer.

The protein resides in the cytoplasm. It catalyses the reaction beta-D-ribopyranose = beta-D-ribofuranose. It participates in carbohydrate metabolism; D-ribose degradation; D-ribose 5-phosphate from beta-D-ribopyranose: step 1/2. Functionally, catalyzes the interconversion of beta-pyran and beta-furan forms of D-ribose. The sequence is that of D-ribose pyranase from Bacillus velezensis (strain DSM 23117 / BGSC 10A6 / LMG 26770 / FZB42) (Bacillus amyloliquefaciens subsp. plantarum).